The sequence spans 781 residues: Putative UPF0313 protein YPO0674/y3502/YP_2990 (781 aa).

The Radical SAM core domain maps to 368–646; that stretch reads AYDMIRFSIN…KALLRYHDPA (279 aa). [4Fe-4S] cluster contacts are provided by cysteine 382, cysteine 386, and cysteine 389. A disordered region spans residues 681 to 781; that stretch reads REARRALRHH…AGSRGKNRQH (101 aa). Polar residues predominate over residues 696–708; that stretch reads KHTSITRQRQPSN. Low complexity predominate over residues 726–750; that stretch reads TSSAHSTSANQSTSANQSTSAAHST.

The protein belongs to the UPF0313 family. It depends on [4Fe-4S] cluster as a cofactor.

This is Putative UPF0313 protein YPO0674/y3502/YP_2990 from Yersinia pestis.